The primary structure comprises 131 residues: Large ribosomal subunit protein bL17 (131 aa).

Belongs to the bacterial ribosomal protein bL17 family. As to quaternary structure, part of the 50S ribosomal subunit. Contacts protein L32.

This is Large ribosomal subunit protein bL17 from Methylobacillus flagellatus (strain ATCC 51484 / DSM 6875 / VKM B-1610 / KT).